The sequence spans 500 residues: Aspartyl/glutamyl-tRNA(Asn/Gln) amidotransferase subunit B (500 aa).

The protein belongs to the GatB/GatE family. GatB subfamily. As to quaternary structure, heterotrimer of A, B and C subunits.

The enzyme catalyses L-glutamyl-tRNA(Gln) + L-glutamine + ATP + H2O = L-glutaminyl-tRNA(Gln) + L-glutamate + ADP + phosphate + H(+). It catalyses the reaction L-aspartyl-tRNA(Asn) + L-glutamine + ATP + H2O = L-asparaginyl-tRNA(Asn) + L-glutamate + ADP + phosphate + 2 H(+). Its function is as follows. Allows the formation of correctly charged Asn-tRNA(Asn) or Gln-tRNA(Gln) through the transamidation of misacylated Asp-tRNA(Asn) or Glu-tRNA(Gln) in organisms which lack either or both of asparaginyl-tRNA or glutaminyl-tRNA synthetases. The reaction takes place in the presence of glutamine and ATP through an activated phospho-Asp-tRNA(Asn) or phospho-Glu-tRNA(Gln). The protein is Aspartyl/glutamyl-tRNA(Asn/Gln) amidotransferase subunit B of Rhizobium meliloti (strain 1021) (Ensifer meliloti).